A 341-amino-acid polypeptide reads, in one-letter code: Probable long-chain-alcohol O-fatty-acyltransferase 9 (341 aa).

A run of 7 helical transmembrane segments spans residues Ile-9–Ile-29, Leu-36–Val-56, Gly-82–Ile-102, Phe-122–Leu-142, Val-146–Leu-166, Met-231–Ile-251, and Arg-295–Ile-315.

It belongs to the wax synthase family.

Its subcellular location is the membrane. The enzyme catalyses a long chain fatty alcohol + a fatty acyl-CoA = a wax ester + CoA. Functionally, catalyzes the final step in the synthesis of long-chain linear esters (waxes). The protein is Probable long-chain-alcohol O-fatty-acyltransferase 9 of Arabidopsis thaliana (Mouse-ear cress).